Here is a 549-residue protein sequence, read N- to C-terminus: Frizzled/smoothened-like sans CRD protein A (549 aa).

Residues 1-22 form the signal peptide; that stretch reads MKFNFKLILIILIINQILIINC. At 23-89 the chain is on the extracellular side; sequence KENKILEIYK…EVNTLSLMIK (67 aa). N-linked (GlcNAc...) asparagine glycosylation is present at Asn63. Residues 90–110 traverse the membrane as a helical segment; it reads ITGTISFIASLILLLIYSPLI. The Cytoplasmic segment spans residues 111–119; the sequence is NRMGYNRHT. A helical membrane pass occupies residues 120 to 140; that stretch reads IGIFFLTFSVFLIMLTDIIYV. Topologically, residues 141 to 162 are extracellular; sequence HHGNDLICPQSHRYSRQNDSGC. Asn158 is a glycosylation site (N-linked (GlcNAc...) asparagine). A helical membrane pass occupies residues 163–183; that stretch reads TITGILFQYGCIAAVLFWATL. Residues 184–198 lie on the Cytoplasmic side of the membrane; it reads SLDLYLTLKKISTKK. The chain crosses the membrane as a helical span at residues 199 to 219; the sequence is VEKWYLIILTLIALILTFVPL. Residues 220–241 lie on the Extracellular side of the membrane; that stretch reads VKKSYGYLVTGLACWILDSTDQ. The helical transmembrane segment at 242-262 threads the bilayer; it reads IIFFWAPFTAILGIGSILIVL. Residues 263-287 are Cytoplasmic-facing; sequence VVYEIYKISKITKQNRGIFQSHIRP. Residues 288-308 form a helical membrane-spanning segment; the sequence is LLMVLFIFGQFLFILAFNALI. The Extracellular portion of the chain corresponds to 309–346; the sequence is NNKYDEYSARMDSYIDCLFSSSSYSYLCRLKTFPFEME. A helical transmembrane segment spans residues 347-367; the sequence is FIVLFFLRLIGIEVLIFYGFT. Residues 368–549 lie on the Cytoplasmic side of the membrane; that stretch reads QQTKKILLHS…NNNSNNDENN (182 aa). 2 stretches are compositionally biased toward low complexity: residues 417 to 474 and 536 to 549; these read NNNN…SQQN and NKNINNNSNNDENN. Disordered stretches follow at residues 417–483 and 528–549; these read NNNN…QKLS and QYEEDEINNKNINNNSNNDENN. Residues 432–475 adopt a coiled-coil conformation; it reads NNLNNNLNNNNLNNNNNLNNLNNLNINNNLKNSQNNLNNSQQNE.

The protein belongs to the G-protein coupled receptor Fz/Smo family.

It is found in the membrane. This Dictyostelium discoideum (Social amoeba) protein is Frizzled/smoothened-like sans CRD protein A (fscA).